The sequence spans 129 residues: Small ribosomal subunit protein uS12 (129 aa).

The tract at residues 1–25 is disordered; that stretch reads MPTYNQLVRFGRKSKTRKTKSPALE. The segment covering 10–20 has biased composition (basic residues); sequence FGRKSKTRKTK. Residue Asp89 is modified to 3-methylthioaspartic acid. The segment at 110–129 is disordered; the sequence is RKQGRSRYGAPSKQVAVTKK.

It belongs to the universal ribosomal protein uS12 family. In terms of assembly, part of the 30S ribosomal subunit. Contacts proteins S8 and S17. May interact with IF1 in the 30S initiation complex.

With S4 and S5 plays an important role in translational accuracy. Functionally, interacts with and stabilizes bases of the 16S rRNA that are involved in tRNA selection in the A site and with the mRNA backbone. Located at the interface of the 30S and 50S subunits, it traverses the body of the 30S subunit contacting proteins on the other side and probably holding the rRNA structure together. The combined cluster of proteins S8, S12 and S17 appears to hold together the shoulder and platform of the 30S subunit. The polypeptide is Small ribosomal subunit protein uS12 (Rickettsia canadensis (strain McKiel)).